The sequence spans 347 residues: uncharacterized protein (347 aa).

Residues C39, H65, C95, C98, C101, C109, and E152 each contribute to the Zn(2+) site.

This sequence belongs to the zinc-containing alcohol dehydrogenase family. It depends on Zn(2+) as a cofactor.

This is an uncharacterized protein from Escherichia coli (strain K12).